The chain runs to 298 residues: Elongation factor Ts (298 aa).

Residues 78–81 (TDFV) form an involved in Mg(2+) ion dislocation from EF-Tu region.

This sequence belongs to the EF-Ts family.

The protein resides in the cytoplasm. Associates with the EF-Tu.GDP complex and induces the exchange of GDP to GTP. It remains bound to the aminoacyl-tRNA.EF-Tu.GTP complex up to the GTP hydrolysis stage on the ribosome. The protein is Elongation factor Ts of Mycoplasmopsis agalactiae (strain NCTC 10123 / CIP 59.7 / PG2) (Mycoplasma agalactiae).